We begin with the raw amino-acid sequence, 225 residues long: uncharacterized protein (225 aa).

This sequence belongs to the mimivirus L31/R44 family.

This is an uncharacterized protein from Acanthamoeba polyphaga (Amoeba).